An 89-amino-acid chain; its full sequence is Small ribosomal subunit protein uS14 (89 aa).

The protein belongs to the universal ribosomal protein uS14 family. Part of the 30S ribosomal subunit. Contacts proteins S3 and S10.

In terms of biological role, binds 16S rRNA, required for the assembly of 30S particles and may also be responsible for determining the conformation of the 16S rRNA at the A site. The chain is Small ribosomal subunit protein uS14 from Azobacteroides pseudotrichonymphae genomovar. CFP2.